The sequence spans 95 residues: Small ribosomal subunit protein bS6 (95 aa).

Belongs to the bacterial ribosomal protein bS6 family.

Functionally, binds together with bS18 to 16S ribosomal RNA. The chain is Small ribosomal subunit protein bS6 from Streptococcus agalactiae serotype Ia (strain ATCC 27591 / A909 / CDC SS700).